Here is a 473-residue protein sequence, read N- to C-terminus: Microtubule-binding protein TANGLED (473 aa).

Positions 1–132 are required for binding to TAN and location to the cortical division sites (CDS) during cytokinesis; the sequence is MVARTPQKQR…VTRDIVDAIA (132 aa). 2 disordered regions span residues 131–218 and 290–354; these read IAPK…ENSF and ASKF…LSTA. Composition is skewed to polar residues over residues 205–216 and 307–329; these read ISPQVKGNNGEN and PTRN…TRTV.

Interacts with POK1. Strongly expressed in flower buds and root tips.

The protein resides in the nucleus. The protein localises to the nucleolus. It is found in the cytoplasm. It localises to the cytoskeleton. Its subcellular location is the phragmoplast. Is required for spatial control cell division during plant development. Through an association with microtubules, acts both for the positioning of cytoskeletal arrays that establish planes of cell division during prophase and for spatial guidance of expanding phragmoplasts toward preestablished cortical division sites (CDS) during cytokinesis. The protein is Microtubule-binding protein TANGLED (TAN) of Arabidopsis thaliana (Mouse-ear cress).